A 424-amino-acid polypeptide reads, in one-letter code: Cyclin-dependent kinase D-1 (424 aa).

The Protein kinase domain occupies 19–299 (YLKREVLGEG…AQQALEHRYF (281 aa)). Residues 25-33 (LGEGTYGVV) and lysine 48 contribute to the ATP site. Threonine 29 is subject to Phosphothreonine. Tyrosine 30 is subject to Phosphotyrosine. The active-site Proton acceptor is aspartate 141. Position 168 is a phosphoserine (serine 168). Phosphothreonine is present on threonine 174. Disordered regions lie at residues 303-337 (PAPT…PVVL) and 359-424 (ADRT…GYTE). A compositionally biased stretch (basic and acidic residues) spans 359 to 374 (ADRTEEHPSGARHMDD).

It belongs to the protein kinase superfamily. CMGC Ser/Thr protein kinase family. CDC2/CDKX subfamily.

It is found in the nucleus. The enzyme catalyses L-seryl-[protein] + ATP = O-phospho-L-seryl-[protein] + ADP + H(+). It carries out the reaction L-threonyl-[protein] + ATP = O-phospho-L-threonyl-[protein] + ADP + H(+). It catalyses the reaction [DNA-directed RNA polymerase] + ATP = phospho-[DNA-directed RNA polymerase] + ADP + H(+). The polypeptide is Cyclin-dependent kinase D-1 (CDKD-1) (Oryza sativa subsp. indica (Rice)).